Here is a 236-residue protein sequence, read N- to C-terminus: MDAVAVVYGITAAGFAVGVAIVGYLYASLEGSEERSILAALALIPGFAGISYVAMAFGIGTVTIGETTLVGFRYLDWVVTTPLLVGFVGYAAGASRRAIFGVMVADALMILTGVGAVVADGTLKWVLFGVSTVFHVSLFAYLYLVFPRSVPDDPQRIGLFSLLKNHIGLLWIAYPLVWLAGPEGLGLATYVGVSITYAFLDLLAKVPYVYFFYARRQVFATKLLRDSGEVTATPAD.

At 1–3 (MDA) the chain is on the extracellular side. Residues 4–25 (VAVVYGITAAGFAVGVAIVGYL) traverse the membrane as a helical segment. The Cytoplasmic segment spans residues 26–34 (YASLEGSEE). Residues 35–56 (RSILAALALIPGFAGISYVAMA) form a helical membrane-spanning segment. At 57–70 (FGIGTVTIGETTLV) the chain is on the extracellular side. Residues 71–92 (GFRYLDWVVTTPLLVGFVGYAA) traverse the membrane as a helical segment. Residues 93 to 95 (GAS) lie on the Cytoplasmic side of the membrane. A helical membrane pass occupies residues 96-118 (RRAIFGVMVADALMILTGVGAVV). Residues 119 to 122 (ADGT) lie on the Extracellular side of the membrane. The chain crosses the membrane as a helical span at residues 123-150 (LKWVLFGVSTVFHVSLFAYLYLVFPRSV). Residues 151 to 153 (PDD) are Cytoplasmic-facing. Residues 154-181 (PQRIGLFSLLKNHIGLLWIAYPLVWLAG) traverse the membrane as a helical segment. Topologically, residues 182–189 (PEGLGLAT) are extracellular. A helical transmembrane segment spans residues 190-222 (YVGVSITYAFLDLLAKVPYVYFFYARRQVFATK). An N6-(retinylidene)lysine modification is found at Lys205. At 223–236 (LLRDSGEVTATPAD) the chain is on the cytoplasmic side.

It belongs to the archaeal/bacterial/fungal opsin family.

Its subcellular location is the cell membrane. This is Bacterial rhodopsin CSR3 from Haloarcula vallismortis (Halobacterium vallismortis).